Reading from the N-terminus, the 385-residue chain is Beta sliding clamp (385 aa).

It belongs to the beta sliding clamp family. In terms of assembly, forms a ring-shaped head-to-tail homodimer around DNA which binds and tethers DNA polymerases and other proteins to the DNA. The DNA replisome complex has a single clamp-loading complex (3 tau and 1 each of delta, delta', psi and chi subunits) which binds 3 Pol III cores (1 core on the leading strand and 2 on the lagging strand) each with a beta sliding clamp dimer. Additional proteins in the replisome are other copies of gamma, psi and chi, Ssb, DNA helicase and RNA primase.

The protein localises to the cytoplasm. Its function is as follows. Confers DNA tethering and processivity to DNA polymerases and other proteins. Acts as a clamp, forming a ring around DNA (a reaction catalyzed by the clamp-loading complex) which diffuses in an ATP-independent manner freely and bidirectionally along dsDNA. Initially characterized for its ability to contact the catalytic subunit of DNA polymerase III (Pol III), a complex, multichain enzyme responsible for most of the replicative synthesis in bacteria; Pol III exhibits 3'-5' exonuclease proofreading activity. The beta chain is required for initiation of replication as well as for processivity of DNA replication. In Borreliella burgdorferi (strain ATCC 35210 / DSM 4680 / CIP 102532 / B31) (Borrelia burgdorferi), this protein is Beta sliding clamp (dnaN).